Reading from the N-terminus, the 345-residue chain is Membrane progestin receptor alpha (345 aa).

Residues 1–74 (MAMAVAQKFN…FQRHNEAVNV (74 aa)) lie on the Cytoplasmic side of the membrane. The helical transmembrane segment at 75-95 (WTHLLAALALLLRLIGLAASV) threads the bilayer. At 96–102 (DFREDPH) the chain is on the extracellular side. A helical transmembrane segment spans residues 103 to 123 (ALPLFFIVLASFTYLSFSAVA). At 124-136 (HLLQAKSEFWHYS) the chain is on the cytoplasmic side. Residues 137-157 (FFFLDYVGVAVYQFGSALAHF) form a helical membrane-spanning segment. At 158–168 (YYAIEPSWHDK) the chain is on the extracellular side. The helical transmembrane segment at 169 to 189 (VQAIFLPTAAFLAWLSCAGSC) threads the bilayer. The Cytoplasmic segment spans residues 190-243 (YNKYSQKPGLLGRIFQEAPSALAYVLDISPVLHRIIVSPLPAEEDPALLYHKCQ). A helical transmembrane segment spans residues 244–264 (VVFFLLAAAFFSTVMPESWFP). Residues 265 to 268 (GSCH) are Extracellular-facing. The chain crosses the membrane as a helical span at residues 269-289 (IFGQGHQVFHVFLVLCTLAQL). Over 290 to 315 (EAVTLDYQARRGIYEPLHARWPHNFS) the chain is Cytoplasmic. Residues 316–336 (GLFLLTVASSSLTALLLSQLV) form a helical membrane-spanning segment. The Extracellular portion of the chain corresponds to 337–345 (RRKLHQKTK).

It belongs to the ADIPOR family. In terms of tissue distribution, detected in most adult tissues. Higher expression found in white fat and liver than brown fat and skeletal muscle.

The protein resides in the cell membrane. In terms of biological role, plasma membrane progesterone (P4) receptor coupled to G proteins. Seems to act through a G(i) mediated pathway. May be involved in oocyte maturation. Involved in neurosteroid inhibition of apoptosis. Also binds dehydroepiandrosterone (DHEA), pregnanolone, pregnenolone and allopregnanolone. This chain is Membrane progestin receptor alpha, found in Mus musculus (Mouse).